The chain runs to 30 residues: Cycloviolacin-O9 (30 aa).

The segment at residues 1–30 (GIPCGESCVWIPCLTSAVGCSCKSKVCYRN) is a cross-link (cyclopeptide (Gly-Asn)). 3 cysteine pairs are disulfide-bonded: C4-C20, C8-C22, and C13-C27.

In terms of processing, this is a cyclic peptide.

Its function is as follows. Probably participates in a plant defense mechanism. The chain is Cycloviolacin-O9 from Viola odorata (Sweet violet).